A 497-amino-acid polypeptide reads, in one-letter code: Putative glucuronosyltransferase PGSIP8 (497 aa).

The helical transmembrane segment at 3-23 (LQRGFVFLSLVLSFMIIETTA) threads the bilayer. Mn(2+) is bound by residues D165 and D167. 5 consecutive transmembrane segments (helical) span residues 319–339 (YSAE…IIVV), 365–385 (GFKL…FFTI), 388–408 (TIHP…LSSI), 418–438 (LPVL…AFPW), and 442–462 (GVVR…FVWV).

Belongs to the glycosyltransferase 8 family. Glycogenin subfamily. Mn(2+) is required as a cofactor.

It is found in the membrane. In Arabidopsis thaliana (Mouse-ear cress), this protein is Putative glucuronosyltransferase PGSIP8 (PGSIP8).